The chain runs to 238 residues: Protein TIFY 3A (238 aa).

The region spanning 39 to 74 is the Tify 1 domain; that stretch reads EPDASTQLTIIFGGSCRVFNGVPAQKVQEIIRIAFA. Residues 101–120 carry the Jas 1 motif; sequence PIARRRSLQRFLEKRRDRST. The Nuclear localization signal 1 motif lies at 103 to 110; that stretch reads ARRRSLQR. A Tify 2 domain is found at 125–160; it reads SMILPSQLTIIFGGSFSVFDGIPAEKVQEILHIAAA. Positions 197–222 match the Jas 2 motif; that stretch reads PIARRRSLQRFFEKRRHRFVHTKPYS. The short motif at 199–206 is the Nuclear localization signal 2 element; sequence ARRRSLQR. The interval 219–238 is disordered; that stretch reads KPYSATTSEADKNETSPIVT.

This sequence belongs to the TIFY/JAZ family. Interacts with MYC2, MYB21, MYB24, AFPH2/NINJA, TIFY10A/JAZ1, TIFY10B/JAZ2, TIFY6B/JAZ3, TIFY6A/JAZ4, TIFY7/JAZ9 and TIFY9/JAZ10. In terms of processing, ubiquitinated. Targeted for degradation by the SCF(COI1) E3 ubiquitin ligase-proteasome pathway during jasmonate signaling.

Its subcellular location is the nucleus. In terms of biological role, repressor of jasmonate (JA) responses. Targets MYC2, MYC3 and MYC4 that are JA-dependent transcription activators. The chain is Protein TIFY 3A (TIFY3A) from Arabidopsis thaliana (Mouse-ear cress).